A 141-amino-acid polypeptide reads, in one-letter code: MATIKVDVVSAEEQIFSGQAKFVALPGEAGELGILPGHTPLITRIRPGAVRIEAENGEEEFVFVAGGILEVQPGAVTVLADTAIRGKDLDEAKAEDARKRAEEALQNTGSNLEYATAQAELAYATAQLAAIQRLRKLRGQH.

It belongs to the ATPase epsilon chain family. F-type ATPases have 2 components, CF(1) - the catalytic core - and CF(0) - the membrane proton channel. CF(1) has five subunits: alpha(3), beta(3), gamma(1), delta(1), epsilon(1). CF(0) has three main subunits: a, b and c.

Its subcellular location is the cell inner membrane. Produces ATP from ADP in the presence of a proton gradient across the membrane. This chain is ATP synthase epsilon chain 1, found in Paraburkholderia xenovorans (strain LB400).